Reading from the N-terminus, the 602-residue chain is MARLTKRRQADTKAIQHLWAAIEIIRNQKQIANIDRITKYMSRVHGMHPKETTRQLSLAVKDGLIVETLTVGCKGSKAGIEQEGYWLPGDEIDWETETHDWYCFECHLPGEVLICDLCFRVYHSKCLSDEFRLRDSSSHWQCPVCRSIKKKHSNKQEMGTYLRFIVSRMKERAIDLNKKGKDSKHPMYRRLVHSAVDVPTIQEKVNEGKYRSYEEFKADAQLLLHNTVIFYGADSEQADIARMLYKDTCHELDELQLCKNCFYLSNARPDNWFCYPCIPNHELVWAKMKGFGFWPAKVMQKEDNQVDVRFFGHHHQRAWIPSENIQDITVNVHRLHVKRSMGWKKACDELELHQRFLREGRFWKSKNEDRGEEEAESSISSTSNEQLKVTQEPRAKKGRRNQSVEPKKEEPEPETEAVSSSQEIPTMPQPIERVSVSTQTKKLSASSPRMLHRSTQTTSDGVCQSMCHDKYTKIFNDFKDRMKSDHKRETERVVREALEKLRSEMEEEKRQAVNKAVASLQGDMDRKGKQLKEKCKEEFVEEIKKLAAQHKQLISQTKKKQWCYNCEEEAMYHCCWNTSYCSIKCQQEHWHAEHKRTCRRKR.

Residues 6–82 (KRRQADTKAI…CKGSKAGIEQ (77 aa)) enclose the SAMD1-like winged helix (WH) domain. The PHD-type zinc-finger motif lies at 100 to 148 (DWYCFECHLPGEVLICDLCFRVYHSKCLSDEFRLRDSSSHWQCPVCRSI). A Bromo domain is found at 149-255 (KKKHSNKQEM…KDTCHELDEL (107 aa)). Cysteine 258, cysteine 261, cysteine 277, and histidine 281 together coordinate Zn(2+). A PWWP domain is found at 280-331 (NHELVWAKMKGFGFWPAKVMQKEDNQVDVRFFGHHHQRAWIPSENIQDITVN). The segment at 291 to 310 (FGFWPAKVMQKEDNQVDVRF) is aromatic cage required for H3.3K36me3-specific binding. Residue lysine 366 forms a Glycyl lysine isopeptide (Lys-Gly) (interchain with G-Cter in SUMO2) linkage. The tract at residues 366–461 (KNEDRGEEEA…HRSTQTTSDG (96 aa)) is disordered. The short motif at 394–400 (RAKKGRR) is the Nuclear localization signal element. Glycyl lysine isopeptide (Lys-Gly) (interchain with G-Cter in SUMO2) cross-links involve residues lysine 407 and lysine 408. Serine 421 is modified (phosphoserine). A compositionally biased stretch (polar residues) spans 435–461 (SVSTQTKKLSASSPRMLHRSTQTTSDG). Zn(2+)-binding residues include cysteine 563, cysteine 566, cysteine 574, cysteine 575, cysteine 581, cysteine 585, histidine 594, and cysteine 598. An MYND-type zinc finger spans residues 563–598 (CYNCEEEAMYHCCWNTSYCSIKCQQEHWHAEHKRTC).

As to quaternary structure, homooligomer; forms homooligomers via its C-terminus. Interacts with histone H3.3 trimethylated at 'Lys-36' (H3.3K36me3). Interacts (via MYND-type zinc finger) with NCOR1. Interacts (via MYND-type zinc finger) with MGA protein (via PXLXP motif). Interacts (via MYND-type zinc finger) with EZH2. Interacts with EMSY and E2F6. Interacts with PIAS1 and UBE2I. Post-translationally, ubiquitinated, leading to proteasomal degradation. In terms of processing, sumoylated following its interaction with PIAS1 and UBE2I.

The protein localises to the nucleus. It localises to the chromosome. Chromatin reader that specifically recognizes and binds histone H3.3 trimethylated at 'Lys-36' (H3.3K36me3) and regulates RNA polymerase II elongation. Does not bind other histone H3 subtypes (H3.1 or H3.2). Colocalizes with highly expressed genes and functions as a transcription corepressor by modulating RNA polymerase II at the elongation stage. Binds non-specifically to dsDNA. Acts as a tumor-suppressor by repressing a transcriptional program essential for tumor cell growth. The sequence is that of Zinc finger MYND domain-containing protein 11 (Zmynd11) from Mus musculus (Mouse).